Here is a 449-residue protein sequence, read N- to C-terminus: NADH-quinone oxidoreductase subunit H (449 aa).

Helical transmembrane passes span 23–43 (WWVIGLKAVLILVVLLLLTLF), 93–113 (AVYLIAPVIAVIPSFITFSVI), 137–157 (VAVLFVMAIASIGIYGIVLGG), 176–196 (MISYEVAMGLALVAVFLYAGS), 209–229 (LWYGLILVPSFVIYLIAMVGE), 258–280 (ALFFLAEYINMATVSAVATTLFL), 300–320 (YWPLLWFLGKVLFFVFIFIWL), 332–352 (FMAFGWKRLIPVALVWIVAVA), and 368–388 (LLIGIGALAVVFLVLFFIGGA). Polar residues predominate over residues 427-442 (RSSPIASSMPQPSAAT). The disordered stretch occupies residues 427–449 (RSSPIASSMPQPSAATRSAGEEI).

This sequence belongs to the complex I subunit 1 family. In terms of assembly, NDH-1 is composed of 14 different subunits. Subunits NuoA, H, J, K, L, M, N constitute the membrane sector of the complex.

The protein localises to the cell membrane. It catalyses the reaction a quinone + NADH + 5 H(+)(in) = a quinol + NAD(+) + 4 H(+)(out). Functionally, NDH-1 shuttles electrons from NADH, via FMN and iron-sulfur (Fe-S) centers, to quinones in the respiratory chain. The immediate electron acceptor for the enzyme in this species is believed to be ubiquinone. Couples the redox reaction to proton translocation (for every two electrons transferred, four hydrogen ions are translocated across the cytoplasmic membrane), and thus conserves the redox energy in a proton gradient. This subunit may bind ubiquinone. The chain is NADH-quinone oxidoreductase subunit H from Nocardioides sp. (strain ATCC BAA-499 / JS614).